The following is a 317-amino-acid chain: Melanocyte-stimulating hormone receptor (317 aa).

At 1–37 (MPVLGSQRRLLGSLNCTPPATFPLTLAPNRTGPQCLE) the chain is on the extracellular side. Residue Asn-29 is glycosylated (N-linked (GlcNAc...) asparagine). A helical transmembrane segment spans residues 38–63 (VSIPDGLFLSLGLVSLVENVLVVAAI). At 64–72 (AKNRNLHSP) the chain is on the cytoplasmic side. The helical transmembrane segment at 73 to 93 (MYYFICCLAVSDLLVSVSNVL) threads the bilayer. Residues 94–118 (ETAVMLLLEAGALAARAAVVQQLDN) lie on the Extracellular side of the membrane. A helical transmembrane segment spans residues 119–140 (VIDMLICGSMVSSLCFLGAIAV). At 141–163 (DRYISIFYALRYHSVVTLPRAWR) the chain is on the cytoplasmic side. A helical membrane pass occupies residues 164–183 (IIAAIWVASILTSLLFITYY). The Extracellular segment spans residues 184–191 (NHTVVLLC). The chain crosses the membrane as a helical span at residues 192 to 211 (LVGFFIAMLALMAVLYVHML). The Cytoplasmic portion of the chain corresponds to 212–240 (ARACQHARGIARLQKRQRPIHQGFGLKGA). A helical transmembrane segment spans residues 241–266 (ATLTILLGVFFLCWGPFFLHLSLIVL). Topologically, residues 267 to 279 (CPQHPTCGCIFKN) are extracellular. A helical transmembrane segment spans residues 280 to 300 (FNLFLALIICNAIVDPLIYAF). Over 301–317 (RSQELRKTLQEVLQCSW) the chain is Cytoplasmic. The S-palmitoyl cysteine moiety is linked to residue Cys-315.

This sequence belongs to the G-protein coupled receptor 1 family. As to quaternary structure, interacts with MGRN1, but does not undergo MGRN1-mediated ubiquitination; this interaction competes with GNAS-binding and thus inhibits agonist-induced cAMP production. Interacts with OPN3; the interaction results in a decrease in MC1R-mediated cAMP signaling and ultimately a decrease in melanin production in melanocytes.

The protein localises to the cell membrane. Its function is as follows. Receptor for MSH (alpha, beta and gamma) and ACTH. The activity of this receptor is mediated by G proteins which activate adenylate cyclase. Mediates melanogenesis, the production of eumelanin (black/brown) and phaeomelanin (red/yellow), via regulation of cAMP signaling in melanocytes. The sequence is that of Melanocyte-stimulating hormone receptor (MC1R) from Capreolus capreolus (European roe deer).